Here is a 169-residue protein sequence, read N- to C-terminus: Peptide deformylase 1 (169 aa).

Fe cation contacts are provided by C92 and H134. E135 is a catalytic residue. Residue H138 participates in Fe cation binding.

It belongs to the polypeptide deformylase family. Fe(2+) serves as cofactor.

The enzyme catalyses N-terminal N-formyl-L-methionyl-[peptide] + H2O = N-terminal L-methionyl-[peptide] + formate. Removes the formyl group from the N-terminal Met of newly synthesized proteins. Requires at least a dipeptide for an efficient rate of reaction. N-terminal L-methionine is a prerequisite for activity but the enzyme has broad specificity at other positions. The chain is Peptide deformylase 1 from Ralstonia nicotianae (strain ATCC BAA-1114 / GMI1000) (Ralstonia solanacearum).